The sequence spans 297 residues: Protease HtpX homolog (297 aa).

The next 2 membrane-spanning stretches (helical) occupy residues 14 to 34 and 39 to 59; these read VILL…AGYL and YQLG…SMIF. His-143 is a binding site for Zn(2+). Glu-144 is an active-site residue. His-147 contacts Zn(2+). 2 consecutive transmembrane segments (helical) span residues 158–178 and 193–213; these read IAVA…RMMW and GFGA…PLAA. Position 225 (Glu-225) interacts with Zn(2+).

The protein belongs to the peptidase M48B family. It depends on Zn(2+) as a cofactor.

It is found in the cell membrane. The polypeptide is Protease HtpX homolog (Streptococcus equi subsp. equi (strain 4047)).